Here is a 1984-residue protein sequence, read N- to C-terminus: Vitellogenin receptor Yl (1984 aa).

Residues 1 to 19 (MCQAEHQVHPSEQRIRVES) are compositionally biased toward basic and acidic residues. The tract at residues 1–48 (MCQAEHQVHPSEQRIRVESPKMTASRRGFNLTSQTRAHPSSGGSTSSR) is disordered. Asn30 carries an N-linked (GlcNAc...) asparagine glycan. The segment covering 30–48 (NLTSQTRAHPSSGGSTSSR) has biased composition (polar residues). 5 LDL-receptor class A domains span residues 89 to 125 (RCDAGQFQCRDGGCILQAKMCDGRGDCKDSSDELDCD), 128 to 167 (LCRPPHWFPCAQPHGACLAAELMCNGIDNCPGGEDELNCP), 183 to 221 (SCSKYEFMCQQDRTCIPIDFMCDGRPDCTDKSDEVAGCK), 226 to 263 (TCPGEGHLCANGRCLRRKQWVCDGVDDCGDGSDERGCL), and 265 to 305 (LCEP…DLCH). Disulfide bonds link Cys90–Cys102, Cys97–Cys115, Cys109–Cys124, Cys129–Cys144, Cys137–Cys157, Cys151–Cys166, Cys184–Cys197, Cys191–Cys210, Cys204–Cys220, Cys227–Cys239, Cys234–Cys253, Cys247–Cys262, Cys266–Cys281, Cys275–Cys294, Cys288–Cys304, Cys310–Cys321, Cys315–Cys331, Cys352–Cys363, Cys359–Cys372, and Cys374–Cys387. Residues 306-343 (SKPDCDAKKCALGAKCHMMPASGAECFCPKGFRLAKFE) enclose the EGF-like 1 domain. The region spanning 348–388 (DVDECKEQDDLCSQGCENTSGGYRCVCDAGYLLDKDNRTCR) is the EGF-like 2; calcium-binding domain. Residues Asn365, Asn384, and Asn429 are each glycosylated (N-linked (GlcNAc...) asparagine). LDL-receptor class B repeat units follow at residues 441-485 (SHIY…DWLT), 486-528 (QNIY…WPQK), 529-572 (GLMF…DMHQ), and 573-615 (QRIY…FEDQ). N-linked (GlcNAc...) asparagine glycosylation is found at Asn666, Asn749, and Asn782. LDL-receptor class B repeat units lie at residues 750 to 792 (GSLI…DHLS), 793 to 836 (RNLY…MPAE), 884 to 925 (QTIF…VHHD), and 934 to 940 (PRIYWTH). Residue Asn1022 is glycosylated (N-linked (GlcNAc...) asparagine). LDL-receptor class A domains are found at residues 1024–1063 (TCVEALDCEFRCHSGECLTMNHRCNGRRDCVDNSDEMNCD), 1073–1110 (LCSPNQFACHSGEQCVDKERRCDNRKDCHDHSDEQHCE), 1117–1153 (KCHVHQHGCDNGKCVDSSLVCDGTNDCGDNSDELLCE), 1157–1194 (RCEPGMFQCGSGSCIAGSWECDGRIDCSDGSDEHDKCV), and 1197–1233 (SCPPDMQRCLLGQCLDRSLVCDGHNDCGDKSDELNCG). 15 disulfides stabilise this stretch: Cys1025/Cys1040, Cys1035/Cys1053, Cys1047/Cys1062, Cys1074/Cys1087, Cys1081/Cys1100, Cys1094/Cys1109, Cys1118/Cys1130, Cys1125/Cys1143, Cys1137/Cys1152, Cys1158/Cys1170, Cys1165/Cys1183, Cys1177/Cys1193, Cys1198/Cys1210, Cys1205/Cys1223, and Cys1217/Cys1232. Residue Asn1240 is glycosylated (N-linked (GlcNAc...) asparagine). 2 LDL-receptor class A domains span residues 1242–1280 (SCAEDQYQCTSNLKICLPSTVRCNGTTECPRGEDEADCG) and 1282–1319 (VCSIYEFKCRSGRECIRREFRCDGQKDCGDGSDELSCE). 6 cysteine pairs are disulfide-bonded: Cys1243-Cys1257, Cys1250-Cys1270, Cys1264-Cys1279, Cys1283-Cys1296, Cys1290-Cys1309, and Cys1303-Cys1318. An N-linked (GlcNAc...) asparagine glycan is attached at Asn1265. Asn1326 carries N-linked (GlcNAc...) asparagine glycosylation. The LDL-receptor class A 13 domain maps to 1339–1376 (SCRPHLFDCQDGECVDLSRVCNNFPDCTNGHDEGPKCA). 5 disulfides stabilise this stretch: Cys1340/Cys1352, Cys1347/Cys1365, Cys1359/Cys1375, Cys1422/Cys1432, and Cys1428/Cys1441. Residues 1418–1453 (DIDECQEQQPCAQLCENTLGGYQCQCHADFMLRQDR) form the EGF-like 3; calcium-binding domain. Residues Asn1475 and Asn1490 are each glycosylated (N-linked (GlcNAc...) asparagine). LDL-receptor class B repeat units lie at residues 1588 to 1637 (ARIF…DPHQ) and 1638 to 1687 (QLLY…YENN). Residues 1800–1820 (WLMALFVLAAGSLIAGLGYMY) traverse the membrane as a helical segment. The Cytoplasmic portion of the chain corresponds to 1821 to 1984 (YQYRQRGHTD…GNDANARFVS (164 aa)). Ser1926 bears the Phosphoserine mark. Disordered regions lie at residues 1927-1951 (KLHALDGGGAGGDGDGGRGVGRQVP) and 1965-1984 (SAGQFGGNYAGNDANARFVS). A compositionally biased stretch (gly residues) spans 1932–1946 (DGGGAGGDGDGGRGV).

Belongs to the LDLR family. As to quaternary structure, interacts with osk (isoform A). In terms of tissue distribution, ovary.

Its subcellular location is the cell membrane. The protein resides in the cytoplasm. It localises to the cell cortex. The protein localises to the cytoplasmic vesicle. It is found in the clathrin-coated vesicle membrane. Its subcellular location is the early endosome membrane. The protein resides in the endosome. It localises to the multivesicular body lumen. In terms of biological role, cell surface receptor involved in uptake of vitellogenins (yolk proteins) into developing oocytes by receptor-mediated endocytosis. May also mediate uptake of apolpp/apolipophorins and their incorporation into yolk granules. Along with its ligands, required for maintenance of microtubule plus-end orientation towards the posterior pole of oocytes. Involved in polarized localization of germ plasm components, such as osk mRNA and vas protein, to the oocyte posterior cortex. Receptor-mediated endocytosis of vitellogenin receptor ligands is critical for osk (isoform A) mediated actin reorganization and the anchoring of germ plasm components to the oocyte cortex. In Drosophila melanogaster (Fruit fly), this protein is Vitellogenin receptor Yl.